We begin with the raw amino-acid sequence, 121 residues long: Large ribosomal subunit protein uL14 (121 aa).

It belongs to the universal ribosomal protein uL14 family. In terms of assembly, part of the 50S ribosomal subunit. Forms a cluster with proteins L3 and L19. In the 70S ribosome, L14 and L19 interact and together make contacts with the 16S rRNA in bridges B5 and B8.

Binds to 23S rRNA. Forms part of two intersubunit bridges in the 70S ribosome. The polypeptide is Large ribosomal subunit protein uL14 (Legionella pneumophila (strain Corby)).